The chain runs to 102 residues: MFAIIETGGKQIKVEEGQEIFVEKLDVNEGDTFTFDKVLFVGGDSVKVGAPTVEGATVTATVNKQGRGKKITVFTYKRRKNSXRKKGHRQPYTKLTIDKINA.

Belongs to the bacterial ribosomal protein bL21 family. As to quaternary structure, part of the 50S ribosomal subunit. Contacts protein L20.

This protein binds to 23S rRNA in the presence of protein L20. The sequence is that of Large ribosomal subunit protein bL21 from Staphylococcus aureus.